A 412-amino-acid polypeptide reads, in one-letter code: DNA replication and repair protein RecF (412 aa).

Residue 30 to 37 (GANGAGKT) coordinates ATP. The tract at residues 369 to 412 (LQVRPGGGTAAVTPDPEYARGEATAANGAASAPTGADAASTSRD) is disordered. A compositionally biased stretch (low complexity) spans 389-412 (GEATAANGAASAPTGADAASTSRD).

This sequence belongs to the RecF family.

Its subcellular location is the cytoplasm. Functionally, the RecF protein is involved in DNA metabolism; it is required for DNA replication and normal SOS inducibility. RecF binds preferentially to single-stranded, linear DNA. It also seems to bind ATP. This is DNA replication and repair protein RecF from Salinibacter ruber (strain DSM 13855 / M31).